Reading from the N-terminus, the 443-residue chain is Ribulose bisphosphate carboxylase large chain (443 aa).

An N6,N6,N6-trimethyllysine modification is found at K7. N116 and T166 together coordinate substrate. The active-site Proton acceptor is the K168. Residue K170 participates in substrate binding. Mg(2+) is bound by residues K194, D196, and E197. K194 bears the N6-carboxylysine mark. H287 (proton acceptor) is an active-site residue. Positions 288, 320, and 372 each coordinate substrate.

The protein belongs to the RuBisCO large chain family. Type I subfamily. In terms of assembly, heterohexadecamer of 8 large chains and 8 small chains; disulfide-linked. The disulfide link is formed within the large subunit homodimers. Requires Mg(2+) as cofactor. Post-translationally, the disulfide bond which can form in the large chain dimeric partners within the hexadecamer appears to be associated with oxidative stress and protein turnover.

The protein resides in the plastid. Its subcellular location is the chloroplast. The catalysed reaction is 2 (2R)-3-phosphoglycerate + 2 H(+) = D-ribulose 1,5-bisphosphate + CO2 + H2O. The enzyme catalyses D-ribulose 1,5-bisphosphate + O2 = 2-phosphoglycolate + (2R)-3-phosphoglycerate + 2 H(+). Functionally, ruBisCO catalyzes two reactions: the carboxylation of D-ribulose 1,5-bisphosphate, the primary event in carbon dioxide fixation, as well as the oxidative fragmentation of the pentose substrate in the photorespiration process. Both reactions occur simultaneously and in competition at the same active site. The polypeptide is Ribulose bisphosphate carboxylase large chain (Abies sachalinensis (Sakhalin fir)).